The chain runs to 472 residues: Sulfate adenylyltransferase subunit 1 (472 aa).

Residues 24-240 (KSLLRFLTCG…ENAEVGTRDL (217 aa)) enclose the tr-type G domain. The interval 33 to 40 (GSVDDGKS) is G1. Residue 33–40 (GSVDDGKS) coordinates GTP. The tract at residues 91–95 (GITID) is G2. The G3 stretch occupies residues 112–115 (DTPG). Residues 112–116 (DTPGH) and 167–170 (NKMD) each bind GTP. The interval 167–170 (NKMD) is G4. The G5 stretch occupies residues 204–206 (SAL).

Belongs to the TRAFAC class translation factor GTPase superfamily. Classic translation factor GTPase family. CysN/NodQ subfamily. Heterodimer composed of CysD, the smaller subunit, and CysN.

The enzyme catalyses sulfate + ATP + H(+) = adenosine 5'-phosphosulfate + diphosphate. It participates in sulfur metabolism; hydrogen sulfide biosynthesis; sulfite from sulfate: step 1/3. With CysD forms the ATP sulfurylase (ATPS) that catalyzes the adenylation of sulfate producing adenosine 5'-phosphosulfate (APS) and diphosphate, the first enzymatic step in sulfur assimilation pathway. APS synthesis involves the formation of a high-energy phosphoric-sulfuric acid anhydride bond driven by GTP hydrolysis by CysN coupled to ATP hydrolysis by CysD. The polypeptide is Sulfate adenylyltransferase subunit 1 (Tolumonas auensis (strain DSM 9187 / NBRC 110442 / TA 4)).